Reading from the N-terminus, the 103-residue chain is Integration host factor subunit alpha (103 aa).

This sequence belongs to the bacterial histone-like protein family. In terms of assembly, heterodimer of an alpha and a beta chain.

In terms of biological role, this protein is one of the two subunits of integration host factor, a specific DNA-binding protein that functions in genetic recombination as well as in transcriptional and translational control. The chain is Integration host factor subunit alpha from Aromatoleum aromaticum (strain DSM 19018 / LMG 30748 / EbN1) (Azoarcus sp. (strain EbN1)).